Here is a 253-residue protein sequence, read N- to C-terminus: MGAEGAVRGARPVPVRAQRVPKYYRLKRHLLDMTDTLPPGTPVPPERTLAAEFDTSRTTVPQALQELVVEGRLERIQGKGTFVAKPKVSQALQLTSYTEDMRAQGLEPTSQLLDIGYVTADDTLAGLLDISTGGRVLRIERLRLASGEPMAIETTHLSAKRFPALRRSLVKYTSLYTALAEVYDVRLAEAEETIETSLATPREAGLLGTDVGLPMLMLSRHSVDGQGEPVEWVRSVYRGDRYKFVARLKRGTD.

Residues 16 to 86 (RAQRVPKYYR…QGKGTFVAKP (71 aa)) enclose the HTH gntR-type domain. Positions 46–65 (ERTLAAEFDTSRTTVPQALQ) form a DNA-binding region, H-T-H motif.

It is found in the cytoplasm. Functionally, global regulator that is part of the nutrient-sensing system. In the absence of glucosamine 6-P (GlcN6P), represses the phosphotransferase system (PTS) specific for the uptake of N-acetylglucosamine (PTSNag), and genes involved in the metabolism of chitin, as well as several genes involved in development, thereby linking carbon availability to morphogenesis. Regulates the dasABC transport operon involved in glucose-related morphogenesis. Essential for development. This chain is HTH-type transcriptional repressor DasR (dasR), found in Streptomyces griseus.